The primary structure comprises 430 residues: Dynactin subunit 2 (430 aa).

2 disordered regions span residues 1–51 (MSEG…IDRS) and 201–228 (SLSS…SSSS). The span at 32-44 (SISNLADESSELV) shows a compositional bias: polar residues. Coiled coils occupy residues 241–319 (TGEQ…QDET) and 397–430 (DDSF…QQQQ).

The protein belongs to the dynactin subunit 2 family. Subunit of dynactin, a multiprotein complex associated with dynein.

The protein resides in the cytoplasm. Its subcellular location is the cytoskeleton. It is found in the membrane. Modulates cytoplasmic dynein binding to an organelle, and plays a role in prometaphase chromosome alignment and spindle organization during mitosis. In Dictyostelium discoideum (Social amoeba), this protein is Dynactin subunit 2 (dynB).